The primary structure comprises 282 residues: Putative hydrolase Bcep18194_B0137 (282 aa).

Positions 124, 126, and 155 each coordinate Mg(2+).

Belongs to the FAH family. Mg(2+) is required as a cofactor.

This chain is Putative hydrolase Bcep18194_B0137, found in Burkholderia lata (strain ATCC 17760 / DSM 23089 / LMG 22485 / NCIMB 9086 / R18194 / 383).